The chain runs to 738 residues: Eukaryotic translation initiation factor 3 subunit B (738 aa).

The segment at 1-120 (MCGCVGVISN…LFIQFKTAQM (120 aa)) is sufficient for interaction with HCR1 and TIF32. Residues 1–245 (MCGCVGVISN…GIQSWGGAQF (245 aa)) form a sufficient for interaction with PIC8 region. An RRM domain is found at 59 to 146 (NFVVVDGAPI…HRLLVNKLSD (88 aa)). WD repeat units follow at residues 211-250 (PRKG…SISK), 322-360 (QKEM…LLDK), 363-406 (VKID…QTAR), and 537-579 (VVDK…ENVR).

The protein belongs to the eIF-3 subunit B family. Component of the eukaryotic translation initiation factor 3 (eIF-3) complex.

It is found in the cytoplasm. Functionally, RNA-binding component of the eukaryotic translation initiation factor 3 (eIF-3) complex, which is involved in protein synthesis of a specialized repertoire of mRNAs and, together with other initiation factors, stimulates binding of mRNA and methionyl-tRNAi to the 40S ribosome. The eIF-3 complex specifically targets and initiates translation of a subset of mRNAs involved in cell proliferation. This Meyerozyma guilliermondii (strain ATCC 6260 / CBS 566 / DSM 6381 / JCM 1539 / NBRC 10279 / NRRL Y-324) (Yeast) protein is Eukaryotic translation initiation factor 3 subunit B.